Reading from the N-terminus, the 270-residue chain is Shikimate dehydrogenase (NADP(+)) (270 aa).

Shikimate-binding positions include 14–16 and Thr-60; that span reads SKS. Lys-64 serves as the catalytic Proton acceptor. Glu-76 contributes to the NADP(+) binding site. The shikimate site is built by Asn-85 and Asp-101. Residues 125 to 129, 149 to 154, and Met-213 contribute to the NADP(+) site; these read GAGGA and NRTASR. Tyr-215 contributes to the shikimate binding site. Gly-236 provides a ligand contact to NADP(+).

Belongs to the shikimate dehydrogenase family. As to quaternary structure, homodimer.

It catalyses the reaction shikimate + NADP(+) = 3-dehydroshikimate + NADPH + H(+). Its pathway is metabolic intermediate biosynthesis; chorismate biosynthesis; chorismate from D-erythrose 4-phosphate and phosphoenolpyruvate: step 4/7. In terms of biological role, involved in the biosynthesis of the chorismate, which leads to the biosynthesis of aromatic amino acids. Catalyzes the reversible NADPH linked reduction of 3-dehydroshikimate (DHSA) to yield shikimate (SA). The protein is Shikimate dehydrogenase (NADP(+)) of Stutzerimonas stutzeri (strain A1501) (Pseudomonas stutzeri).